A 225-amino-acid polypeptide reads, in one-letter code: MOB-like protein phocein (225 aa).

Zn(2+) is bound by residues C92, C97, C110, H113, C119, H127, H169, and H174.

Belongs to the MOB1/phocein family. Binds STRN4. Interacts with DNM1 and EPS15. Interacts with nucleoside diphosphate kinase. Interacts with CTTNBP2. Interacts with CTTNBP2NL. Part of the core of STRIPAK complexes composed of PP2A catalytic and scaffolding subunits, the striatins (PP2A regulatory subunits), the striatin-associated proteins MOB4, STRIP1 and STRIP2, PDCD10 and members of the STE20 kinases, such as STK24 and STK26. Post-translationally, phosphorylated on serine residues. Highly expressed in adrenal gland, spinal cord, brain and cerebellum. Detected at lower levels in heart and skeletal muscle, and at very low levels in spleen, liver and intestine.

It localises to the cytoplasm. Its subcellular location is the membrane. It is found in the golgi apparatus. The protein resides in the golgi stack membrane. Its function is as follows. Part of the striatin-interacting phosphatase and kinase (STRIPAK) complexes. STRIPAK complexes have critical roles in protein (de)phosphorylation and are regulators of multiple signaling pathways including Hippo, MAPK, nuclear receptor and cytoskeleton remodeling. Different types of STRIPAK complexes are involved in a variety of biological processes such as cell growth, differentiation, apoptosis, metabolism and immune regulation. This is MOB-like protein phocein (Mob4) from Rattus norvegicus (Rat).